The primary structure comprises 130 residues: MSTPRIALIAHDAKKDDIVALAGAYRATLAQCRLVATGTTGGRIAQAHGLDVERKLSGPLGGDLQIGAELADGRVDIVIFLRDPMTAQPHDPDITALVRACDVHDVPVATNVATARVLLDDLARRLTANA.

Residues 1–130 enclose the MGS-like domain; sequence MSTPRIALIA…DLARRLTANA (130 aa). Substrate-binding positions include H11, K15, 37–40, and 57–58; these read TGTT and SG. The Proton donor/acceptor role is filled by D63. H90 serves as a coordination point for substrate.

Belongs to the methylglyoxal synthase family.

The enzyme catalyses dihydroxyacetone phosphate = methylglyoxal + phosphate. Catalyzes the formation of methylglyoxal from dihydroxyacetone phosphate. This Burkholderia mallei (strain NCTC 10247) protein is Methylglyoxal synthase.